A 455-amino-acid chain; its full sequence is ATP-dependent protease ATPase subunit HslU (455 aa).

ATP contacts are provided by residues isoleucine 19 and 61–66 (GVGKTE). The tract at residues 144–163 (ESKVGFANEPAEDAASKKEK) is disordered. Positions 268, 333, and 405 each coordinate ATP.

Belongs to the ClpX chaperone family. HslU subfamily. As to quaternary structure, a double ring-shaped homohexamer of HslV is capped on each side by a ring-shaped HslU homohexamer. The assembly of the HslU/HslV complex is dependent on binding of ATP.

The protein localises to the cytoplasm. Its function is as follows. ATPase subunit of a proteasome-like degradation complex; this subunit has chaperone activity. The binding of ATP and its subsequent hydrolysis by HslU are essential for unfolding of protein substrates subsequently hydrolyzed by HslV. HslU recognizes the N-terminal part of its protein substrates and unfolds these before they are guided to HslV for hydrolysis. In Francisella tularensis subsp. holarctica (strain FTNF002-00 / FTA), this protein is ATP-dependent protease ATPase subunit HslU.